A 77-amino-acid chain; its full sequence is uncharacterized protein (77 aa).

Residues 13–67 (VLQYMVNNDYSLNQLALEIGVSPATLSRVLNGERRPGQLVIGKMLHYFNLKFEDL) enclose the HTH cro/C1-type domain. Residues 24 to 43 (LNQLALEIGVSPATLSRVLN) constitute a DNA-binding region (H-T-H motif).

It localises to the cytoplasm. This is an uncharacterized protein from Bacillus subtilis (strain 168).